The following is a 325-amino-acid chain: MANIEKDHQKVILVGDGAVGSSYAYALTLQGIAQEVGIVDIFKEKTQGDAIDLSDALAFTSPKKIYAAEYSDAKDADVVVITAGAPQKPGETRLDLVSKNLKILKTIVDPIVESGFNGIFLVAANPVDILTYATWKLSGFPKERVIGSGTSLDSARFRKDIAEMVNVDARSVHAYIMGEHGDTEFPVWSHANIGGIKISEWVKAHPEVKEEELVKIFESVRDAAYTIINLKGATFYGIGTALARITKAILDDENAVLPLSVFMDGQYGLNDIFIGSPAVINRSGITNILEIPLTDHEMESMHKSAKQLKDIVTKAFEELDIETRQ.

NAD(+) is bound by residues Val19, Asp40, Lys45, Tyr70, and 84–85 (GA). Gln87 and Arg93 together coordinate substrate. NAD(+) is bound by residues Thr106, 123-125 (AAN), and Ser148. 125-128 (NPVD) is a substrate binding site. 153-156 (DSAR) lines the substrate pocket. Positions 158 and 173 each coordinate beta-D-fructose 1,6-bisphosphate. His180 serves as the catalytic Proton acceptor. A Phosphotyrosine modification is found at Tyr225. Thr234 provides a ligand contact to substrate.

It belongs to the LDH/MDH superfamily. LDH family. Homotetramer.

Its subcellular location is the cytoplasm. The enzyme catalyses (S)-lactate + NAD(+) = pyruvate + NADH + H(+). It participates in fermentation; pyruvate fermentation to lactate; (S)-lactate from pyruvate: step 1/1. Its activity is regulated as follows. Allosterically activated by fructose 1,6-bisphosphate (FBP). Functionally, catalyzes the conversion of lactate to pyruvate. This is L-lactate dehydrogenase from Latilactobacillus sakei subsp. sakei (strain 23K) (Lactobacillus sakei subsp. sakei).